A 582-amino-acid chain; its full sequence is PTS system lactose-specific EIICB component (582 aa).

The region spanning 8-409 is the PTS EIIC type-3 domain; that stretch reads IEKGKPFFEK…VVDVIIYYPF (402 aa). 9 consecutive transmembrane segments (helical) span residues 30–50, 64–84, 103–123, 137–157, 176–196, 222–242, 283–303, 339–359, and 381–401; these read GFIA…ITYV, GILM…VAGT, INFI…AADP, KGLL…NFFV, VFKD…LDLL, GWIG…VGIH, FVAT…FMWL, VFFI…KFFV, and IVMG…LIVV. Residues 453–473 form a disordered region; it reads ASEADTDDTSSVDETTSTSST. A compositionally biased stretch (low complexity) spans 464-473; it reads VDETTSTSST. The region spanning 479-582 is the PTS EIIB type-3 domain; sequence QTNVLVLCAG…LEFVKQQFNN (104 aa). Cysteine 486 (phosphocysteine intermediate; for EIIB activity) is an active-site residue. Position 486 is a phosphocysteine; by EIIA (cysteine 486).

The protein localises to the cell membrane. The enzyme catalyses lactose(out) + N(pros)-phospho-L-histidyl-[protein] = lactose 6-phosphate(in) + L-histidyl-[protein]. Its function is as follows. The phosphoenolpyruvate-dependent sugar phosphotransferase system (sugar PTS), a major carbohydrate active transport system, catalyzes the phosphorylation of incoming sugar substrates concomitantly with their translocation across the cell membrane. The enzyme II LacEF PTS system is involved in lactose transport. This chain is PTS system lactose-specific EIICB component, found in Staphylococcus epidermidis (strain ATCC 35984 / DSM 28319 / BCRC 17069 / CCUG 31568 / BM 3577 / RP62A).